A 230-amino-acid chain; its full sequence is Demethylmenaquinone methyltransferase (230 aa).

S-adenosyl-L-methionine-binding positions include Thr62, Asp80, 102–103 (DG), and Ser119.

The protein belongs to the class I-like SAM-binding methyltransferase superfamily. MenG/UbiE family.

It catalyses the reaction a 2-demethylmenaquinol + S-adenosyl-L-methionine = a menaquinol + S-adenosyl-L-homocysteine + H(+). Its pathway is quinol/quinone metabolism; menaquinone biosynthesis; menaquinol from 1,4-dihydroxy-2-naphthoate: step 2/2. In terms of biological role, methyltransferase required for the conversion of demethylmenaquinol (DMKH2) to menaquinol (MKH2). The polypeptide is Demethylmenaquinone methyltransferase (Streptomyces griseus subsp. griseus (strain JCM 4626 / CBS 651.72 / NBRC 13350 / KCC S-0626 / ISP 5235)).